A 613-amino-acid chain; its full sequence is Portal protein (613 aa).

Residues 577-613 (ATGGDHGIRQAPSARGDTEPDHAKSKPARDPPPGAGS) are disordered. Over residues 592-605 (GDTEPDHAKSKPAR) the composition is skewed to basic and acidic residues.

It belongs to the herpesviridae portal protein family. In terms of assembly, homododecamerizes. Interacts with terminase subunits TRM1 and TRM3.

It is found in the virion. The protein resides in the host nucleus. It localises to the host cytoplasm. In terms of biological role, forms a portal in the viral capsid through which viral DNA is translocated during DNA packaging. Assembles as a dodecamer at a single fivefold axe of the T=16 icosahedric capsid. Binds to the molecular motor that translocates the viral DNA, termed terminase. This is Portal protein from Epstein-Barr virus (strain B95-8) (HHV-4).